The following is a 118-amino-acid chain: uncharacterized protein (118 aa).

The next 3 helical transmembrane spans lie at 17 to 37 (IIII…FAIL), 60 to 80 (INYT…IMIF), and 90 to 110 (YIEQ…GSFW).

The protein localises to the membrane. This is an uncharacterized protein from Acanthamoeba polyphaga mimivirus (APMV).